We begin with the raw amino-acid sequence, 558 residues long: Aspartate--tRNA ligase 2, cytoplasmic (558 aa).

The span at 1–18 shows a compositional bias: low complexity; it reads MSSESEIPPLSSSTAAAE. The disordered stretch occupies residues 1–57; that stretch reads MSSESEIPPLSSSTAAAEESGEKTSKKAAKKEAAKLEKLRRRQEQEEATRRTASISL. At Ser-2 the chain carries N-acetylserine. The segment covering 20 to 50 has biased composition (basic and acidic residues); the sequence is SGEKTSKKAAKKEAAKLEKLRRRQEQEEATR. Positions 110–195 form a DNA-binding region, OB; sequence VLIRGRVHTN…QVEIQVRKVY (86 aa). Glu-286 is an L-aspartate binding site. The interval 308 to 311 is aspartate; that stretch reads QLHK. Arg-330 lines the L-aspartate pocket. ATP-binding positions include 330-332, 338-340, and Glu-481; these read RAE and RHL. Residues Glu-481 and Ser-484 each coordinate Mg(2+). 2 residues coordinate L-aspartate: Ser-484 and Arg-488. 529 to 532 provides a ligand contact to ATP; it reads GLER.

It belongs to the class-II aminoacyl-tRNA synthetase family. Type 2 subfamily.

The protein localises to the cytoplasm. It is found in the cytosol. Its subcellular location is the endoplasmic reticulum. The catalysed reaction is tRNA(Asp) + L-aspartate + ATP = L-aspartyl-tRNA(Asp) + AMP + diphosphate. Catalyzes the specific attachment of an amino acid to its cognate tRNA in a 2 step reaction: the amino acid (AA) is first activated by ATP to form AA-AMP and then transferred to the acceptor end of the tRNA. Involved in the perception of beta-aminobutyric acid (BABA) and required for BABA priming effect in disease resistance. The chain is Aspartate--tRNA ligase 2, cytoplasmic from Arabidopsis thaliana (Mouse-ear cress).